An 860-amino-acid polypeptide reads, in one-letter code: Translation initiation factor IF-2 (860 aa).

Over residues 1–11 the composition is skewed to basic and acidic residues; sequence MSDTKSGDDKT. Residues 1–265 form a disordered region; it reads MSDTKSGDDK…MRRRQEKFKR (265 aa). Residues 79–88 are compositionally biased toward low complexity; sequence AAPVVQEAPK. Basic and acidic residues predominate over residues 110–183; that stretch reads SRSEMEARRR…RRRAEEEARR (74 aa). One can recognise a tr-type G domain in the interval 358-525; sequence PRPPVVTIMG…AILLQAEILD (168 aa). The segment at 367 to 374 is G1; it reads GHVDHGKT. 367–374 lines the GTP pocket; the sequence is GHVDHGKT. Residues 392 to 396 form a G2 region; sequence GITQH. The tract at residues 413-416 is G3; the sequence is DTPG. Residues 413-417 and 467-470 each bind GTP; these read DTPGH and NKID. The interval 467 to 470 is G4; the sequence is NKID. A G5 region spans residues 503–505; it reads SAT.

It belongs to the TRAFAC class translation factor GTPase superfamily. Classic translation factor GTPase family. IF-2 subfamily.

The protein localises to the cytoplasm. In terms of biological role, one of the essential components for the initiation of protein synthesis. Protects formylmethionyl-tRNA from spontaneous hydrolysis and promotes its binding to the 30S ribosomal subunits. Also involved in the hydrolysis of GTP during the formation of the 70S ribosomal complex. In Mesorhizobium japonicum (strain LMG 29417 / CECT 9101 / MAFF 303099) (Mesorhizobium loti (strain MAFF 303099)), this protein is Translation initiation factor IF-2.